The chain runs to 234 residues: DNA repair protein RecO (234 aa).

The protein belongs to the RecO family.

Its function is as follows. Involved in DNA repair and RecF pathway recombination. The sequence is that of DNA repair protein RecO from Alteromonas mediterranea (strain DSM 17117 / CIP 110805 / LMG 28347 / Deep ecotype).